We begin with the raw amino-acid sequence, 342 residues long: MTITLGQLAQHLGAELHGDADVIIQRIANLETAQAGEIGFLSDSKYQQYLATTQASAVLLRAADLAMCQTNALVVKDPYIAFARVAQLLDSTPAPAVNIHPSAVIADDVQLGQGVAVGANAVIETGVVLGDGAIIGAGCFVGKNSKLGARSKLWANVTIYHNVRIGDDCLVQSGTVIGADGFGYANERGEWIKIPQLGGVVIGNRVEIGSNTCIDRGAIDDTRIADNVIIDNLCQIAHNVEIGYGTAIAGAATFAGSTKIGKYCIIGGASVFNGHIEICDQVTVTGMAMVMRSITEPGLYSSGIPAQTNKEWRKTAARTLHIDDMYKRLSNIEKLLDKQEQK.

The active-site Proton acceptor is His-238.

It belongs to the transferase hexapeptide repeat family. LpxD subfamily. In terms of assembly, homotrimer.

The enzyme catalyses a UDP-3-O-[(3R)-3-hydroxyacyl]-alpha-D-glucosamine + a (3R)-hydroxyacyl-[ACP] = a UDP-2-N,3-O-bis[(3R)-3-hydroxyacyl]-alpha-D-glucosamine + holo-[ACP] + H(+). It functions in the pathway bacterial outer membrane biogenesis; LPS lipid A biosynthesis. Functionally, catalyzes the N-acylation of UDP-3-O-acylglucosamine using 3-hydroxyacyl-ACP as the acyl donor. Is involved in the biosynthesis of lipid A, a phosphorylated glycolipid that anchors the lipopolysaccharide to the outer membrane of the cell. This chain is UDP-3-O-acylglucosamine N-acyltransferase, found in Tolumonas auensis (strain DSM 9187 / NBRC 110442 / TA 4).